We begin with the raw amino-acid sequence, 381 residues long: Chaperone protein DnaJ (381 aa).

The 66-residue stretch at 5–70 (DYYEVLGVSR…DKKAAYDRYG (66 aa)) folds into the J domain. A CR-type zinc finger spans residues 140–218 (GVQKTINVPA…CHGAGRVEKE (79 aa)). Zn(2+)-binding residues include C153, C156, C170, C173, C192, C195, C206, and C209. CXXCXGXG motif repeat units follow at residues 153–160 (CDACKGTG), 170–177 (CPTCSGMG), 192–199 (CPTCNGMG), and 206–213 (CKVCHGAG).

This sequence belongs to the DnaJ family. As to quaternary structure, homodimer. Zn(2+) is required as a cofactor.

Its subcellular location is the cytoplasm. Its function is as follows. Participates actively in the response to hyperosmotic and heat shock by preventing the aggregation of stress-denatured proteins and by disaggregating proteins, also in an autonomous, DnaK-independent fashion. Unfolded proteins bind initially to DnaJ; upon interaction with the DnaJ-bound protein, DnaK hydrolyzes its bound ATP, resulting in the formation of a stable complex. GrpE releases ADP from DnaK; ATP binding to DnaK triggers the release of the substrate protein, thus completing the reaction cycle. Several rounds of ATP-dependent interactions between DnaJ, DnaK and GrpE are required for fully efficient folding. Also involved, together with DnaK and GrpE, in the DNA replication of plasmids through activation of initiation proteins. This is Chaperone protein DnaJ from Cereibacter sphaeroides (strain KD131 / KCTC 12085) (Rhodobacter sphaeroides).